The following is a 263-amino-acid chain: Complement control protein C3 (263 aa).

The signal sequence occupies residues 1-19; that stretch reads MKVESVTFLTLLGIGCVLS. 4 Sushi domains span residues 20-83, 84-145, 146-203, and 204-263; these read CCTI…QCIK, RRCP…ICES, VKCQ…TCQI, and VKCP…KCVR. 8 cysteine pairs are disulfide-bonded: Cys-21-Cys-70, Cys-54-Cys-81, Cys-86-Cys-126, Cys-112-Cys-143, Cys-148-Cys-190, Cys-176-Cys-201, Cys-206-Cys-248, and Cys-234-Cys-261.

Belongs to the receptors of complement activation (RCA) family. As to quaternary structure, heterodimer with A56 protein; disulfide-linked.

Its subcellular location is the virion membrane. The protein resides in the host cell membrane. It is found in the secreted. In terms of biological role, serves to protect the virus against complement attack by inhibiting both classical and alternative pathways of complement activation. Binds C3b and C4b. The protein is Complement control protein C3 of Vaccinia virus (strain Copenhagen) (VACV).